The primary structure comprises 224 residues: Ribose-5-phosphate isomerase A (224 aa).

Substrate is bound by residues 32 to 35 (TGST), 85 to 88 (DGAD), and 98 to 101 (KGGG). The Proton acceptor role is filled by Glu107. Residue Lys125 coordinates substrate.

Belongs to the ribose 5-phosphate isomerase family. Homodimer.

The catalysed reaction is aldehydo-D-ribose 5-phosphate = D-ribulose 5-phosphate. It functions in the pathway carbohydrate degradation; pentose phosphate pathway; D-ribose 5-phosphate from D-ribulose 5-phosphate (non-oxidative stage): step 1/1. Its function is as follows. Catalyzes the reversible conversion of ribose-5-phosphate to ribulose 5-phosphate. This chain is Ribose-5-phosphate isomerase A, found in Pseudomonas putida (strain GB-1).